Here is a 257-residue protein sequence, read N- to C-terminus: Ditrans,polycis-undecaprenyl-diphosphate synthase ((2E,6E)-farnesyl-diphosphate specific) (257 aa).

Residue Asp-23 is part of the active site. Position 23 (Asp-23) interacts with Mg(2+). Substrate is bound by residues 24-27 (GNGR), Trp-28, Arg-36, His-40, and 68-70 (SSE). The active-site Proton acceptor is the Asn-71. Residues Trp-72, Arg-74, Arg-191, and 197–199 (RIS) contribute to the substrate site. Glu-210 lines the Mg(2+) pocket.

It belongs to the UPP synthase family. In terms of assembly, homodimer. It depends on Mg(2+) as a cofactor.

It carries out the reaction 8 isopentenyl diphosphate + (2E,6E)-farnesyl diphosphate = di-trans,octa-cis-undecaprenyl diphosphate + 8 diphosphate. Its function is as follows. Catalyzes the sequential condensation of isopentenyl diphosphate (IPP) with (2E,6E)-farnesyl diphosphate (E,E-FPP) to yield (2Z,6Z,10Z,14Z,18Z,22Z,26Z,30Z,34E,38E)-undecaprenyl diphosphate (di-trans,octa-cis-UPP). UPP is the precursor of glycosyl carrier lipid in the biosynthesis of bacterial cell wall polysaccharide components such as peptidoglycan and lipopolysaccharide. The polypeptide is Ditrans,polycis-undecaprenyl-diphosphate synthase ((2E,6E)-farnesyl-diphosphate specific) (Xanthomonas axonopodis pv. citri (strain 306)).